The primary structure comprises 244 residues: tRNA (guanine-N(7)-)-methyltransferase (244 aa).

S-adenosyl-L-methionine contacts are provided by Glu-75, Glu-100, Asp-127, and Asp-150. Residue Asp-150 is part of the active site. Substrate is bound by residues Lys-154, Asp-186, and 223–226 (TRFE).

This sequence belongs to the class I-like SAM-binding methyltransferase superfamily. TrmB family.

The enzyme catalyses guanosine(46) in tRNA + S-adenosyl-L-methionine = N(7)-methylguanosine(46) in tRNA + S-adenosyl-L-homocysteine. Its pathway is tRNA modification; N(7)-methylguanine-tRNA biosynthesis. In terms of biological role, catalyzes the formation of N(7)-methylguanine at position 46 (m7G46) in tRNA. The protein is tRNA (guanine-N(7)-)-methyltransferase of Xylella fastidiosa (strain 9a5c).